A 600-amino-acid polypeptide reads, in one-letter code: RNA-binding protein 47 (600 aa).

Low complexity predominate over residues 1-25 (MTAEDSASAVAMSNPSPSSSSKSSS). The tract at residues 1 to 37 (MTAEDSASAVAMSNPSPSSSSKSSSGHPQHHCTVPEG) is disordered. RRM domains lie at 82 to 160 (CEIF…SSVD), 162 to 244 (CRLF…WAEP), and 257 to 329 (KILY…LAKP).

It belongs to the RRM RBM47 family. As to quaternary structure, homodimer. May interact with MAVS; may regulate MAVS lysosomal degradation.

It is found in the nucleus. The protein localises to the cytoplasm. In terms of biological role, single-stranded RNA-binding protein that functions in a variety of RNA processes, including alternative splicing, RNA stabilization, and RNA editing. Independently of its RNA-binding activity, could negatively regulate MAVS by promoting its lysosomal degradation. The protein is RNA-binding protein 47 (rbm47) of Danio rerio (Zebrafish).